Consider the following 225-residue polypeptide: Biosynthetic peptidoglycan transglycosylase (225 aa).

A helical membrane pass occupies residues 7 to 27 (SFLFKMVLILLIAPIVLVGVV).

This sequence belongs to the glycosyltransferase 51 family.

Its subcellular location is the cell inner membrane. The enzyme catalyses [GlcNAc-(1-&gt;4)-Mur2Ac(oyl-L-Ala-gamma-D-Glu-L-Lys-D-Ala-D-Ala)](n)-di-trans,octa-cis-undecaprenyl diphosphate + beta-D-GlcNAc-(1-&gt;4)-Mur2Ac(oyl-L-Ala-gamma-D-Glu-L-Lys-D-Ala-D-Ala)-di-trans,octa-cis-undecaprenyl diphosphate = [GlcNAc-(1-&gt;4)-Mur2Ac(oyl-L-Ala-gamma-D-Glu-L-Lys-D-Ala-D-Ala)](n+1)-di-trans,octa-cis-undecaprenyl diphosphate + di-trans,octa-cis-undecaprenyl diphosphate + H(+). Its pathway is cell wall biogenesis; peptidoglycan biosynthesis. Functionally, peptidoglycan polymerase that catalyzes glycan chain elongation from lipid-linked precursors. This Vibrio parahaemolyticus serotype O3:K6 (strain RIMD 2210633) protein is Biosynthetic peptidoglycan transglycosylase.